The sequence spans 448 residues: Bifunctional protein GlmU (448 aa).

The pyrophosphorylase stretch occupies residues 1–230 (MRSCLSIVLA…FDNIVGINNC (230 aa)). UDP-N-acetyl-alpha-D-glucosamine is bound by residues 9 to 12 (LAAG), K23, Q76, and 81 to 82 (GT). D106 serves as a coordination point for Mg(2+). Residues G142, E156, N171, and N228 each coordinate UDP-N-acetyl-alpha-D-glucosamine. N228 contributes to the Mg(2+) binding site. Residues 231–251 (FELFEADSLWQKRKARDLMLS) form a linker region. An N-acetyltransferase region spans residues 252–448 (GVTILKPETV…VRLSGNQQKK (197 aa)). UDP-N-acetyl-alpha-D-glucosamine is bound by residues R317 and K335. The Proton acceptor role is filled by H347. Y350 and N361 together coordinate UDP-N-acetyl-alpha-D-glucosamine. Residues A364, 370–371 (NY), S389, S407, and R424 contribute to the acetyl-CoA site.

This sequence in the N-terminal section; belongs to the N-acetylglucosamine-1-phosphate uridyltransferase family. In the C-terminal section; belongs to the transferase hexapeptide repeat family. Homotrimer. The cofactor is Mg(2+).

It is found in the cytoplasm. The catalysed reaction is alpha-D-glucosamine 1-phosphate + acetyl-CoA = N-acetyl-alpha-D-glucosamine 1-phosphate + CoA + H(+). The enzyme catalyses N-acetyl-alpha-D-glucosamine 1-phosphate + UTP + H(+) = UDP-N-acetyl-alpha-D-glucosamine + diphosphate. It functions in the pathway nucleotide-sugar biosynthesis; UDP-N-acetyl-alpha-D-glucosamine biosynthesis; N-acetyl-alpha-D-glucosamine 1-phosphate from alpha-D-glucosamine 6-phosphate (route II): step 2/2. Its pathway is nucleotide-sugar biosynthesis; UDP-N-acetyl-alpha-D-glucosamine biosynthesis; UDP-N-acetyl-alpha-D-glucosamine from N-acetyl-alpha-D-glucosamine 1-phosphate: step 1/1. The protein operates within bacterial outer membrane biogenesis; LPS lipid A biosynthesis. Its function is as follows. Catalyzes the last two sequential reactions in the de novo biosynthetic pathway for UDP-N-acetylglucosamine (UDP-GlcNAc). The C-terminal domain catalyzes the transfer of acetyl group from acetyl coenzyme A to glucosamine-1-phosphate (GlcN-1-P) to produce N-acetylglucosamine-1-phosphate (GlcNAc-1-P), which is converted into UDP-GlcNAc by the transfer of uridine 5-monophosphate (from uridine 5-triphosphate), a reaction catalyzed by the N-terminal domain. The protein is Bifunctional protein GlmU of Bartonella quintana (strain Toulouse) (Rochalimaea quintana).